The primary structure comprises 341 residues: tRNA N6-adenosine threonylcarbamoyltransferase (341 aa).

Residues H111 and H115 each coordinate Fe cation. Substrate-binding positions include 134 to 138 (LVSGG), D167, G180, and N276. D304 serves as a coordination point for Fe cation.

Belongs to the KAE1 / TsaD family. Requires Fe(2+) as cofactor.

The protein resides in the cytoplasm. The enzyme catalyses L-threonylcarbamoyladenylate + adenosine(37) in tRNA = N(6)-L-threonylcarbamoyladenosine(37) in tRNA + AMP + H(+). Functionally, required for the formation of a threonylcarbamoyl group on adenosine at position 37 (t(6)A37) in tRNAs that read codons beginning with adenine. Is involved in the transfer of the threonylcarbamoyl moiety of threonylcarbamoyl-AMP (TC-AMP) to the N6 group of A37, together with TsaE and TsaB. TsaD likely plays a direct catalytic role in this reaction. This is tRNA N6-adenosine threonylcarbamoyltransferase from Pseudomonas aeruginosa (strain ATCC 15692 / DSM 22644 / CIP 104116 / JCM 14847 / LMG 12228 / 1C / PRS 101 / PAO1).